A 95-amino-acid chain; its full sequence is Small ribosomal subunit protein bS20 (95 aa).

This sequence belongs to the bacterial ribosomal protein bS20 family.

Its function is as follows. Binds directly to 16S ribosomal RNA. The sequence is that of Small ribosomal subunit protein bS20 from Fervidobacterium nodosum (strain ATCC 35602 / DSM 5306 / Rt17-B1).